Here is a 137-residue protein sequence, read N- to C-terminus: MRPQQAPVSGKVFIQRDYSGGTRCQFQSKFPAELENRIDRQQFEETVRTLNNLYAEAEKLGGQSYLEGCLACLTAYTIFLCMETHYEKVLKKIAKFIQEQNEKIYAPQGLLLTDPIERGLRVIEITIYEDRGMSSGR.

S-palmitoyl cysteine attachment occurs at residues C69 and C72.

It belongs to the ERF4 family. In terms of assembly, interacts with ZDHHC9.

Its subcellular location is the golgi apparatus membrane. Functionally, may be involved in protein transport from Golgi to cell surface. The ZDHHC9-GOLGA7 complex is a palmitoyltransferase specific for HRAS and NRAS. This Gallus gallus (Chicken) protein is Golgin subfamily A member 7 (GOLGA7).